The sequence spans 211 residues: Phosphoserine phosphatase (211 aa).

Catalysis depends on aspartate 11, which acts as the Nucleophile. Mg(2+)-binding residues include aspartate 11 and aspartate 13. Aspartate 13 serves as the catalytic Proton donor. Residues glutamate 20, arginine 56, 99–100 (SG), and lysine 144 each bind substrate. Mg(2+) is bound at residue aspartate 167. Position 170 (asparagine 170) interacts with substrate.

The protein belongs to the HAD-like hydrolase superfamily. SerB family. Requires Mg(2+) as cofactor.

It catalyses the reaction O-phospho-L-serine + H2O = L-serine + phosphate. The catalysed reaction is O-phospho-D-serine + H2O = D-serine + phosphate. Its pathway is amino-acid biosynthesis; L-serine biosynthesis; L-serine from 3-phospho-D-glycerate: step 3/3. The protein is Phosphoserine phosphatase of Methanocaldococcus jannaschii (strain ATCC 43067 / DSM 2661 / JAL-1 / JCM 10045 / NBRC 100440) (Methanococcus jannaschii).